A 649-amino-acid polypeptide reads, in one-letter code: Threonine--tRNA ligase (649 aa).

The TGS domain maps to 1-66 (MVQITLPDGS…DNDAQLAIVT (66 aa)). The interval 247–538 (DHRKIGRELD…LIENHAGAMP (292 aa)) is catalytic. The Zn(2+) site is built by Cys338, His389, and His515.

Belongs to the class-II aminoacyl-tRNA synthetase family. Homodimer. Zn(2+) serves as cofactor.

It is found in the cytoplasm. It catalyses the reaction tRNA(Thr) + L-threonine + ATP = L-threonyl-tRNA(Thr) + AMP + diphosphate + H(+). In terms of biological role, catalyzes the attachment of threonine to tRNA(Thr) in a two-step reaction: L-threonine is first activated by ATP to form Thr-AMP and then transferred to the acceptor end of tRNA(Thr). Also edits incorrectly charged L-seryl-tRNA(Thr). The polypeptide is Threonine--tRNA ligase (Bordetella bronchiseptica (strain ATCC BAA-588 / NCTC 13252 / RB50) (Alcaligenes bronchisepticus)).